The sequence spans 101 residues: Small ribosomal subunit protein uS14 (101 aa).

This sequence belongs to the universal ribosomal protein uS14 family. As to quaternary structure, part of the 30S ribosomal subunit. Contacts proteins S3 and S10.

Functionally, binds 16S rRNA, required for the assembly of 30S particles and may also be responsible for determining the conformation of the 16S rRNA at the A site. The sequence is that of Small ribosomal subunit protein uS14 from Blochmanniella pennsylvanica (strain BPEN).